A 569-amino-acid chain; its full sequence is Arylsulfatase I (569 aa).

The first 23 residues, M1 to A23, serve as a signal peptide directing secretion. D55, D56, and C93 together coordinate Ca(2+). C93 acts as the Nucleophile in catalysis. C93 carries the post-translational modification 3-oxoalanine (Cys). Residue K147 participates in substrate binding. H149 is a catalytic residue. Position 239 (H239) interacts with substrate. N-linked (GlcNAc...) asparagine glycosylation is found at N276 and N288. The Ca(2+) site is built by D297 and N298. K315 provides a ligand contact to substrate. 2 N-linked (GlcNAc...) asparagine glycosylation sites follow: N466 and N496. The tract at residues R510–F539 is disordered.

Belongs to the sulfatase family. Ca(2+) is required as a cofactor. The oxidation of Cys-93 residue to 3-oxoalanine (also known as C(alpha)-formylglycine) by SUMF1/Sulfatase-modifying factor 1, seems critical for catalytic activity. Expressed in placenta, in embryonic stem cells, fetal eyes and lens.

It is found in the secreted. The protein localises to the endoplasmic reticulum. Displays arylsulfatase activity at neutral pH, when co-expressed with SUMF1; arylsulfatase activity is measured in the secretion medium of retinal cell line, but no activity is recorded when measured in cell extracts. Lacks arylsulfatase activity. This chain is Arylsulfatase I (ARSI), found in Homo sapiens (Human).